The sequence spans 81 residues: CLAVATA3/ESR (CLE)-related protein 25 (81 aa).

An N-terminal signal peptide occupies residues 1–30; the sequence is MGGNGIRALVGVIASLGLIVFLLVGILANS. Positions 57–81 are disordered; that stretch reads KRKVPNGPDPIHNRKAETSRRPPRV. 2 positions are modified to hydroxyproline: P61 and P64. An O-linked (Ara...) hydroxyproline glycan is attached at P64. Over residues 67–81 the composition is skewed to basic and acidic residues; sequence IHNRKAETSRRPPRV.

It belongs to the CLV3/ESR signal peptide family. In terms of processing, the O-glycosylation (arabinosylation) of the hydroxyproline Pro-64 enhances binding affinity of the CLE25p peptide for its receptor. In terms of tissue distribution, mostly expressed in flowers and siliques, and, to a lower extent, in roots, stems, apex, seedlings, leaves and pollen.

It is found in the secreted. The protein resides in the extracellular space. Functionally, extracellular signal peptide that regulates cell fate. Represses root apical meristem maintenance. Regulates the transition of protophloem cells from proliferation to differentiation, thus impinging on postembryonic growth capacity of the root meristem; this signaling pathway requires CRN and CLV2. The polypeptide is CLAVATA3/ESR (CLE)-related protein 25 (Arabidopsis thaliana (Mouse-ear cress)).